Consider the following 101-residue polypeptide: Small ribosomal subunit protein uS10 (101 aa).

It belongs to the universal ribosomal protein uS10 family. Part of the 30S ribosomal subunit.

Involved in the binding of tRNA to the ribosomes. This chain is Small ribosomal subunit protein uS10, found in Amoebophilus asiaticus (strain 5a2).